Here is a 221-residue protein sequence, read N- to C-terminus: Small ribosomal subunit protein uS3 (221 aa).

One can recognise a KH type-2 domain in the interval 39-108; it reads IRKFVKKRSY…NVIINIVEVK (70 aa).

The protein belongs to the universal ribosomal protein uS3 family. As to quaternary structure, part of the 30S ribosomal subunit. Forms a tight complex with proteins S10 and S14.

Its function is as follows. Binds the lower part of the 30S subunit head. Binds mRNA in the 70S ribosome, positioning it for translation. The protein is Small ribosomal subunit protein uS3 of Clostridium novyi (strain NT).